A 415-amino-acid chain; its full sequence is Palmitoyl-acyl carrier protein thioesterase, chloroplastic (415 aa).

Composition is skewed to low complexity over residues methionine 1–alanine 16 and lysine 24–proline 41. The N-terminal 60 residues, methionine 1–serine 60, are a transit peptide targeting the chloroplast. Positions methionine 1 to proline 81 are disordered. Active-site residues include asparagine 314, histidine 316, and cysteine 351.

This sequence belongs to the acyl-ACP thioesterase family.

It localises to the plastid. The protein resides in the chloroplast. It carries out the reaction hexadecanoyl-[ACP] + H2O = hexadecanoate + holo-[ACP] + H(+). Plays an essential role in chain termination during de novo fatty acid synthesis. High thioesterase activity for palmitoyl-ACP versus other acyl-ACPs. The polypeptide is Palmitoyl-acyl carrier protein thioesterase, chloroplastic (FATB1) (Cuphea hookeriana (Cigar plant)).